Reading from the N-terminus, the 790-residue chain is Valine--tRNA ligase (790 aa).

The 'HIGH' region motif lies at 40–50 (PTVSGKMHMGH). A 'KMSKS' region motif is present at residues 521 to 525 (KMSKS). Residue lysine 524 participates in ATP binding.

Belongs to the class-I aminoacyl-tRNA synthetase family. ValS type 2 subfamily.

It is found in the cytoplasm. It carries out the reaction tRNA(Val) + L-valine + ATP = L-valyl-tRNA(Val) + AMP + diphosphate. Its function is as follows. Catalyzes the attachment of valine to tRNA(Val). As ValRS can inadvertently accommodate and process structurally similar amino acids such as threonine, to avoid such errors, it has a 'posttransfer' editing activity that hydrolyzes mischarged Thr-tRNA(Val) in a tRNA-dependent manner. This chain is Valine--tRNA ligase, found in Thermoplasma volcanium (strain ATCC 51530 / DSM 4299 / JCM 9571 / NBRC 15438 / GSS1).